We begin with the raw amino-acid sequence, 420 residues long: Pregnancy-associated glycoprotein 2 (420 aa).

The first 15 residues, 1 to 15 (MKWLVILGLVALSDC), serve as a signal peptide directing secretion. 2 N-linked (GlcNAc...) asparagine glycosylation sites follow: asparagine 56 and asparagine 79. One can recognise a Peptidase A1 domain in the interval 76–417 (YVGNISIGTP…DEGQNRIGLA (342 aa)). Residue aspartate 94 is part of the active site. Intrachain disulfides connect cysteine 107–cysteine 112 and cysteine 268–cysteine 272. Aspartate 277 is an active-site residue. An intrachain disulfide couples cysteine 341 to cysteine 376.

It belongs to the peptidase A1 family. In terms of tissue distribution, expressed throughout the chorion, with the signal localized exclusively over the trophectoderm.

The protein localises to the secreted. Its subcellular location is the extracellular space. This Sus scrofa (Pig) protein is Pregnancy-associated glycoprotein 2 (PAG2).